The primary structure comprises 910 residues: Protein translocase subunit SecA (910 aa).

Residues Gln-86, 104 to 108, and Asp-499 each bind ATP; that span reads GEGKT. Residues Cys-894, Cys-896, Cys-905, and His-906 each contribute to the Zn(2+) site.

The protein belongs to the SecA family. In terms of assembly, monomer and homodimer. Part of the essential Sec protein translocation apparatus which comprises SecA, SecYEG and auxiliary proteins SecDF-YajC and YidC. Requires Zn(2+) as cofactor.

The protein resides in the cell inner membrane. It localises to the cytoplasm. It catalyses the reaction ATP + H2O + cellular proteinSide 1 = ADP + phosphate + cellular proteinSide 2.. Its function is as follows. Part of the Sec protein translocase complex. Interacts with the SecYEG preprotein conducting channel. Has a central role in coupling the hydrolysis of ATP to the transfer of proteins into and across the cell membrane, serving both as a receptor for the preprotein-SecB complex and as an ATP-driven molecular motor driving the stepwise translocation of polypeptide chains across the membrane. The protein is Protein translocase subunit SecA of Rickettsia bellii (strain RML369-C).